The chain runs to 282 residues: Bis(5'-nucleosyl)-tetraphosphatase, symmetrical (282 aa).

It belongs to the Ap4A hydrolase family.

It catalyses the reaction P(1),P(4)-bis(5'-adenosyl) tetraphosphate + H2O = 2 ADP + 2 H(+). In terms of biological role, hydrolyzes diadenosine 5',5'''-P1,P4-tetraphosphate to yield ADP. The chain is Bis(5'-nucleosyl)-tetraphosphatase, symmetrical from Klebsiella pneumoniae subsp. pneumoniae (strain ATCC 700721 / MGH 78578).